The sequence spans 527 residues: Nucleobase-ascorbate transporter LPE1 (527 aa).

The next 12 membrane-spanning stretches (helical) occupy residues 43–63, 68–88, 92–112, 132–152, 163–183, 189–209, 219–239, 284–304, 361–383, 387–409, 427–447, and 458–478; these read LVML…MGGG, AIVI…QVHF, LPAV…IILS, LQGA…FGIW, AAVP…FPGV, VGLP…HLFA, AVLV…AAGA, FAML…LIAV, VIKI…AVLA, LPIF…FSLL, LFLG…FGFG, and VMVN…AYLL.

This sequence belongs to the nucleobase:cation symporter-2 (NCS2) (TC 2.A.40) family. In terms of tissue distribution, highly expressed in roots.

Its subcellular location is the membrane. Inhibited by excess of xanthin, uric acid and ascorbic acid, and by 100 um N,N-dicyclohexylcarbodiimide and 30 um carbonyl cyanide m-chlorophenyl-hydrazone. In terms of biological role, high affinity uric acid-xanthine transporter in A.nidulans. Binds, but cannot transport ascorbic acid. The chain is Nucleobase-ascorbate transporter LPE1 (LPE1) from Zea mays (Maize).